The chain runs to 78 residues: Large ribosomal subunit protein bL28 (78 aa).

Residues 1 to 25 form a disordered region; sequence MSRVCQVTGKRPAVGNNRSHAKNAT.

It belongs to the bacterial ribosomal protein bL28 family.

This Vibrio cholerae serotype O1 (strain ATCC 39541 / Classical Ogawa 395 / O395) protein is Large ribosomal subunit protein bL28.